The sequence spans 211 residues: FMN-dependent NADH:quinone oxidoreductase 2 (211 aa).

17–19 (SYS) serves as a coordination point for FMN.

Belongs to the azoreductase type 1 family. Homodimer. The cofactor is FMN.

It carries out the reaction 2 a quinone + NADH + H(+) = 2 a 1,4-benzosemiquinone + NAD(+). It catalyses the reaction N,N-dimethyl-1,4-phenylenediamine + anthranilate + 2 NAD(+) = 2-(4-dimethylaminophenyl)diazenylbenzoate + 2 NADH + 2 H(+). Its activity is regulated as follows. Strongly inhibited by Pb(2+) and weakly inhibited by Cu(2+), Hg(2+) and Fe(2+). Stable in presence of Ag(+). Its function is as follows. Quinone reductase that provides resistance to thiol-specific stress caused by electrophilic quinones. Contributes to resistance to 2-methylhydroquinone (2-MHQ) and catechol. Exhibits NADH-dependent 2,6-dichloroindophenol (DCIP) oxidoreductase activity. Also exhibits azoreductase activity. Catalyzes the reductive cleavage of the azo bond in aromatic azo compounds to the corresponding amines. Can reduce methyl red. The protein is FMN-dependent NADH:quinone oxidoreductase 2 of Bacillus subtilis (strain 168).